The chain runs to 370 residues: Chaperone protein DnaJ (370 aa).

Residues 6 to 70 (DFYEILGVSK…QKRANYDQFG (65 aa)) enclose the J domain. Residues 134–216 (GANKSVTLNV…CHGKGFNTKR (83 aa)) form a CR-type zinc finger. Residues cysteine 147, cysteine 150, cysteine 164, cysteine 167, cysteine 190, cysteine 193, cysteine 204, and cysteine 207 each coordinate Zn(2+). CXXCXGXG motif repeat units follow at residues 147–154 (CTSCHGSG), 164–171 (CSRCGGTG), 190–197 (CPDCGGSG), and 204–211 (CGECHGKG).

The protein belongs to the DnaJ family. In terms of assembly, homodimer. Zn(2+) is required as a cofactor.

The protein resides in the cytoplasm. In terms of biological role, participates actively in the response to hyperosmotic and heat shock by preventing the aggregation of stress-denatured proteins and by disaggregating proteins, also in an autonomous, DnaK-independent fashion. Unfolded proteins bind initially to DnaJ; upon interaction with the DnaJ-bound protein, DnaK hydrolyzes its bound ATP, resulting in the formation of a stable complex. GrpE releases ADP from DnaK; ATP binding to DnaK triggers the release of the substrate protein, thus completing the reaction cycle. Several rounds of ATP-dependent interactions between DnaJ, DnaK and GrpE are required for fully efficient folding. Also involved, together with DnaK and GrpE, in the DNA replication of plasmids through activation of initiation proteins. This Erysipelothrix rhusiopathiae protein is Chaperone protein DnaJ.